The primary structure comprises 364 residues: sn-glycerol-3-phosphate import ATP-binding protein UgpC (364 aa).

The region spanning 4–235 is the ABC transporter domain; the sequence is VVLRNVRKTY…PATTFVASFI (232 aa). Position 37-44 (37-44) interacts with ATP; sequence GPSGCGKS.

The protein belongs to the ABC transporter superfamily. sn-glycerol-3-phosphate importer (TC 3.A.1.1.3) family. The complex is composed of two ATP-binding proteins (UgpC), two transmembrane proteins (UgpA and UgpE) and a solute-binding protein (UgpB).

It is found in the cell inner membrane. It catalyses the reaction sn-glycerol 3-phosphate(out) + ATP + H2O = sn-glycerol 3-phosphate(in) + ADP + phosphate + H(+). Its function is as follows. Part of the ABC transporter complex UgpBAEC involved in sn-glycerol-3-phosphate (G3P) import. Responsible for energy coupling to the transport system. In Rhodopseudomonas palustris (strain BisB5), this protein is sn-glycerol-3-phosphate import ATP-binding protein UgpC.